Reading from the N-terminus, the 175-residue chain is 6,7-dimethyl-8-ribityllumazine synthase (175 aa).

5-amino-6-(D-ribitylamino)uracil-binding positions include Phe24, 58-60 (ALE), and 82-84 (AVI). Residue 87-88 (ET) participates in (2S)-2-hydroxy-3-oxobutyl phosphate binding. The Proton donor role is filled by His90. 5-amino-6-(D-ribitylamino)uracil is bound at residue Asn115. Arg129 serves as a coordination point for (2S)-2-hydroxy-3-oxobutyl phosphate. The disordered stretch occupies residues 151–175 (LEPEEDDEDEDEEDEDFDDEETDRR). Residues 152–175 (EPEEDDEDEDEEDEDFDDEETDRR) are compositionally biased toward acidic residues.

It belongs to the DMRL synthase family.

The catalysed reaction is (2S)-2-hydroxy-3-oxobutyl phosphate + 5-amino-6-(D-ribitylamino)uracil = 6,7-dimethyl-8-(1-D-ribityl)lumazine + phosphate + 2 H2O + H(+). It functions in the pathway cofactor biosynthesis; riboflavin biosynthesis; riboflavin from 2-hydroxy-3-oxobutyl phosphate and 5-amino-6-(D-ribitylamino)uracil: step 1/2. Its function is as follows. Catalyzes the formation of 6,7-dimethyl-8-ribityllumazine by condensation of 5-amino-6-(D-ribitylamino)uracil with 3,4-dihydroxy-2-butanone 4-phosphate. This is the penultimate step in the biosynthesis of riboflavin. The protein is 6,7-dimethyl-8-ribityllumazine synthase of Bordetella petrii (strain ATCC BAA-461 / DSM 12804 / CCUG 43448).